Here is a 396-residue protein sequence, read N- to C-terminus: L-lactate dehydrogenase (396 aa).

Positions 1-380 constitute an FMN hydroxy acid dehydrogenase domain; that stretch reads MIISAASDYR…TQDSLVQGLG (380 aa). Residue Tyr-24 coordinates substrate. FMN-binding residues include Ser-106 and Gln-127. Substrate is bound at residue Tyr-129. Thr-155 is a binding site for FMN. Arg-164 is a binding site for substrate. Lys-251 contacts FMN. His-275 (proton acceptor) is an active-site residue. Arg-278 serves as a coordination point for substrate. Residue 306-330 coordinates FMN; it reads DSGIRNGLDVVRMIALGADTILLGR.

This sequence belongs to the FMN-dependent alpha-hydroxy acid dehydrogenase family. It depends on FMN as a cofactor.

It localises to the cell inner membrane. The catalysed reaction is (S)-lactate + A = pyruvate + AH2. In terms of biological role, catalyzes the conversion of L-lactate to pyruvate. Is coupled to the respiratory chain. The sequence is that of L-lactate dehydrogenase from Escherichia coli O81 (strain ED1a).